Consider the following 433-residue polypeptide: ATP-dependent protease ATPase subunit HslU (433 aa).

ATP is bound by residues valine 18, 60-65 (GVGKTE), aspartate 246, glutamate 311, and arginine 383.

This sequence belongs to the ClpX chaperone family. HslU subfamily. As to quaternary structure, a double ring-shaped homohexamer of HslV is capped on each side by a ring-shaped HslU homohexamer. The assembly of the HslU/HslV complex is dependent on binding of ATP.

Its subcellular location is the cytoplasm. Functionally, ATPase subunit of a proteasome-like degradation complex; this subunit has chaperone activity. The binding of ATP and its subsequent hydrolysis by HslU are essential for unfolding of protein substrates subsequently hydrolyzed by HslV. HslU recognizes the N-terminal part of its protein substrates and unfolds these before they are guided to HslV for hydrolysis. This chain is ATP-dependent protease ATPase subunit HslU, found in Rhodopseudomonas palustris (strain HaA2).